The chain runs to 250 residues: 5-oxoprolinase subunit A (250 aa).

It belongs to the LamB/PxpA family. As to quaternary structure, forms a complex composed of PxpA, PxpB and PxpC.

It catalyses the reaction 5-oxo-L-proline + ATP + 2 H2O = L-glutamate + ADP + phosphate + H(+). Functionally, catalyzes the cleavage of 5-oxoproline to form L-glutamate coupled to the hydrolysis of ATP to ADP and inorganic phosphate. The protein is 5-oxoprolinase subunit A of Chromohalobacter salexigens (strain ATCC BAA-138 / DSM 3043 / CIP 106854 / NCIMB 13768 / 1H11).